We begin with the raw amino-acid sequence, 2492 residues long: Polyketide synthase 19 (2492 aa).

In terms of domain architecture, Ketosynthase family 3 (KS3) spans Arg12–Ser463. Residues Cys202, His341, and His383 each act as for beta-ketoacyl synthase activity in the active site. The segment at Val571–Lys866 is malonyl-CoA:ACP transacylase (MAT) domain. The N-terminal hotdog fold stretch occupies residues His967–Pro1110. The interval His967–Pro1270 is dehydratase (DH) domain. Residues His967–Arg1273 form the PKS/mFAS DH domain. Catalysis depends on His1001, which acts as the Proton acceptor; for dehydratase activity. The tract at residues Met1125–Arg1273 is C-terminal hotdog fold. The active-site Proton donor; for dehydratase activity is Asp1183. Positions Leu1431–Ile1604 are C-methyltransferase (CMeT) domain. The interval Ser2118 to Leu2293 is ketoreductase (KR) domain. The Carrier domain maps to Pro2404–Trp2479. Ser2438 carries the O-(pantetheine 4'-phosphoryl)serine modification.

Functionally, highly reducing polyketide synthase; part of the gene cluster that mediates the biosynthesis of fujikurins A-D, secondary metabolites playing a role during rice infection. The polyketide synthase PKS19 acts with the trans-enoyl reductase FFUJ_12240 and the polyketide transferase FFUJ_12241 to produce fujikurins, however, the biosynthesis pathway has not been identified yet. The protein is Polyketide synthase 19 of Gibberella fujikuroi (strain CBS 195.34 / IMI 58289 / NRRL A-6831) (Bakanae and foot rot disease fungus).